The following is a 1335-amino-acid chain: MSIEAVFDQVTDPSLRAVIQEEAHKQIKDLFKETTRCNPYSIPQAGRKVLEKYAIPYNPYSLKLHPHAASKAFEVSLYEAASNYLPSTSSTPVTFMFTKPGKLRFFRRRGHVDKFVNADIVPRDLARYPRDTVYSYLPEITTTHAFIGDTLHHFGEDFLVEVFSRSPKLEVLLATMVLPPEAFYRMESLHPSVYTLLYRDDRFLYLPGGLSGGEYEHRYKDLNWLTFGTVTHGGITITGERIETKAANHLFLFRRGRLATPKFRSFDMPEPMVLLPKVFRPAKYNVQKPIPREKANKWLMYVKSIGNATIRDVWAKLRQTIANADIGLFSPTELVHLTNYFLLLGRLDSHNSFDQVLADSVLKAWFRPMVAKLQEIKHKLMGQTQFMQLCQALEMTEVDLVFEVRDSKTPHKQAVPLDREIENVLLEGVSSEPTYTETEGVADGPLPPPMQTAAEPSATSDEPESSSSREIEHQPAPEITLDEEEPQRDDLPWDAWRTQLRALGFEASERQYDPDGELISPILSTRRLPKTPIDTTLYATLDKIARCPTFYKPDTDRAQTYARDVMAGKTGAILKQQPFEWKTTLKRKTKEEPKEIHLAVLHGAGGSGKSYALQEFMRNNSDTPITVILPTNELRADWKKKLPAHDKDTFMTYENALLCPRGDIFIMDDYTKLPRGYIEAFVQNAPALSLLILTGDPNQAEHFETTEDNEINSLAPASVVFGKFSRYHINATHRNPRNLANALGVYSETPGEVKVLYTRNIKTGYHNLVPSQMKMRNYASLGQRASTYAGCQGITAPRVQIILDSDTPRCTRQVMYTALSRATTEVVLCNTMPDEKSFFQKVEATPYLKAILNLNKEIKVTEGDLTEEPPREPAPPTTHLPVENRIILNEALVEPLPDKHDREIYSNSTGFSNCIQTQDPYIQAFQHQQAKDETLFWATVEKRLAASTPKDNWTEFKTKRPLGDVLWLAYKRAMVLPDEPIKFNPELWWACADEVQKTYLSKPIHALKNGILRQSPDFDWNKLQIFLKSQWVKKIDKIGKIDVNAGQTIAAFYQPTVMLFGTMARYMRRIRDTYQPGEILINCEKNQKHISKWVESNWNHRLPAYTNDFTAYDQSQDGAMLQFEVLKALHHDIPHEVVEAYVALKLNSKMFLGTLAIMRLTGEGPTFDANTECNIAYTHARFEIPKNVAQMYAGDDCALNCRPVERQSFLPLVEKFTLKSKPKVFEQKVGSWPEFCGNLITPRGYLKDPMKLQHCLQLAQRKKPSEPGSLKDVAENYAMDLLPTYELGDALYEIFDERQMNAHYQSVRTLITCAHTKVLRVAQALQEDCTFFSSI.

The Alphavirus-like MT domain occupies 58–225 (NPYSLKLHPH…EHRYKDLNWL (168 aa)). Residues 428–492 (GVSSEPTYTE…EEEPQRDDLP (65 aa)) form a disordered region. A compositionally biased stretch (low complexity) spans 453–466 (AAEPSATSDEPESS). The region spanning 564–729 (DVMAGKTGAI…VFGKFSRYHI (166 aa)) is the (+)RNA virus helicase ATP-binding domain. 603–610 (GAGGSGKS) contacts ATP. Positions 730–863 (NATHRNPRNL…LNKEIKVTEG (134 aa)) constitute a (+)RNA virus helicase C-terminal domain. Residues 1102-1209 (LPAYTNDFTA…NCRPVERQSF (108 aa)) enclose the RdRp catalytic domain.

It belongs to the potexviruses/carlaviruses RNA replication protein family.

It catalyses the reaction RNA(n) + a ribonucleoside 5'-triphosphate = RNA(n+1) + diphosphate. It carries out the reaction ATP + H2O = ADP + phosphate + H(+). Its function is as follows. RNA replication. The central part of this protein possibly functions as an ATP-binding helicase. The polypeptide is RNA replication protein (Foxtail mosaic virus).